The chain runs to 387 residues: Mannose-6-phosphate isomerase (387 aa).

It belongs to the N-acylglucosamine 2-epimerase family.

It catalyses the reaction D-mannose 6-phosphate = D-fructose 6-phosphate. This is Mannose-6-phosphate isomerase (pmi) from Rhizobium meliloti (strain 1021) (Ensifer meliloti).